Consider the following 240-residue polypeptide: Probable transcriptional regulatory protein OEOE_0768 (240 aa).

The segment at 1-21 is disordered; it reads MSGHSKWHNIQGRKNAQDAKR.

This sequence belongs to the TACO1 family.

The protein localises to the cytoplasm. This chain is Probable transcriptional regulatory protein OEOE_0768, found in Oenococcus oeni (strain ATCC BAA-331 / PSU-1).